Consider the following 182-residue polypeptide: Crossover junction endodeoxyribonuclease RuvC (182 aa).

Residues Asp7, Glu69, and Asp141 contribute to the active site. Residues Asp7, Glu69, and Asp141 each coordinate Mg(2+).

Belongs to the RuvC family. In terms of assembly, homodimer which binds Holliday junction (HJ) DNA. The HJ becomes 2-fold symmetrical on binding to RuvC with unstacked arms; it has a different conformation from HJ DNA in complex with RuvA. In the full resolvosome a probable DNA-RuvA(4)-RuvB(12)-RuvC(2) complex forms which resolves the HJ. Mg(2+) serves as cofactor.

The protein localises to the cytoplasm. The catalysed reaction is Endonucleolytic cleavage at a junction such as a reciprocal single-stranded crossover between two homologous DNA duplexes (Holliday junction).. Functionally, the RuvA-RuvB-RuvC complex processes Holliday junction (HJ) DNA during genetic recombination and DNA repair. Endonuclease that resolves HJ intermediates. Cleaves cruciform DNA by making single-stranded nicks across the HJ at symmetrical positions within the homologous arms, yielding a 5'-phosphate and a 3'-hydroxyl group; requires a central core of homology in the junction. The consensus cleavage sequence is 5'-(A/T)TT(C/G)-3'. Cleavage occurs on the 3'-side of the TT dinucleotide at the point of strand exchange. HJ branch migration catalyzed by RuvA-RuvB allows RuvC to scan DNA until it finds its consensus sequence, where it cleaves and resolves the cruciform DNA. This Albidiferax ferrireducens (strain ATCC BAA-621 / DSM 15236 / T118) (Rhodoferax ferrireducens) protein is Crossover junction endodeoxyribonuclease RuvC.